The primary structure comprises 608 residues: MQFQTEVNQLLQLMIHSLYSNKEIFLRELISNASDALDKLNFLSVSDDKYKSLKFEPKIEIKIDKDKKTLSISDNGIGMDKDDLINNLGTIAKSGTKSFLENLSGDAKKDSQLIGQFGVGFYSAFMVASKIEVLSKKALDDKAYLWSSDANGYEIDDANKEEQGTSITLYLKDDEFANAYKIESIIEKYSNHIQFPIFMEKEEFTPAKEGEEEGKTELKISQINKANALWRMQKSSLKAEDYERFYEQNFHDSNKPLLYLHTKSEGKLEYNSLFFIPQNAPFDLFRVDYQSGLKLYVKRVFISDDDKELLPTYLRFVRGIIDVEDLPLNVSREILQENQILKGVKEASVKKILGELEKLKNNDKEKYLSFFKTFGKVLKEGLYGFGGEKDSLLKLMLYKSTKGENLRSLEEYKNDLQGEQKEIFYIAGNNESLLRTSPLLEEYKQKNIEVLLMDDEIDSLVTPMLEFEGLKFVAINQVEDKNELSDEEKNTFAPLVAKFKELLKDQVEDVRLTSRLKDSPSCIVYDKNKPDFAMQQLLKQMGQEQNFKPILEINPKHAIFTGLKNNESFSADIATLVLNMAKLSEGMGVDNPAEFNASLTKIINKAFS.

The segment at methionine 1 to arginine 332 is a; substrate-binding. Residues glutamate 333–glutamine 536 are b. The segment at leucine 537–serine 608 is c.

Belongs to the heat shock protein 90 family. As to quaternary structure, homodimer.

The protein localises to the cytoplasm. In terms of biological role, molecular chaperone. Has ATPase activity. In Campylobacter jejuni subsp. jejuni serotype O:23/36 (strain 81-176), this protein is Chaperone protein HtpG.